Here is a 219-residue protein sequence, read N- to C-terminus: NADH-quinone oxidoreductase subunit C (219 aa).

This sequence belongs to the complex I 30 kDa subunit family. In terms of assembly, NDH-1 is composed of 14 different subunits. Subunits NuoB, C, D, E, F, and G constitute the peripheral sector of the complex.

Its subcellular location is the cell inner membrane. The enzyme catalyses a quinone + NADH + 5 H(+)(in) = a quinol + NAD(+) + 4 H(+)(out). Functionally, NDH-1 shuttles electrons from NADH, via FMN and iron-sulfur (Fe-S) centers, to quinones in the respiratory chain. The immediate electron acceptor for the enzyme in this species is believed to be ubiquinone. Couples the redox reaction to proton translocation (for every two electrons transferred, four hydrogen ions are translocated across the cytoplasmic membrane), and thus conserves the redox energy in a proton gradient. This chain is NADH-quinone oxidoreductase subunit C, found in Methylorubrum populi (strain ATCC BAA-705 / NCIMB 13946 / BJ001) (Methylobacterium populi).